The primary structure comprises 656 residues: Probable Xaa-Pro aminopeptidase P (656 aa).

Mn(2+) is bound by residues Asp453, Asp464, Glu562, and Glu576.

The protein belongs to the peptidase M24B family. Mn(2+) is required as a cofactor.

It catalyses the reaction Release of any N-terminal amino acid, including proline, that is linked to proline, even from a dipeptide or tripeptide.. Its function is as follows. Catalyzes the removal of a penultimate prolyl residue from the N-termini of peptides. This chain is Probable Xaa-Pro aminopeptidase P (ampp), found in Pyrenophora teres f. teres (strain 0-1) (Barley net blotch fungus).